A 1160-amino-acid polypeptide reads, in one-letter code: Major DNA-binding protein (1160 aa).

A Required for filament formation motif is present at residues 808-809; that stretch reads FW. Residues 1139–1160 are required for nuclear localization; sequence ARGGEHAFDEDCGLLPAKRGRL.

The protein belongs to the herpesviridae major DNA-binding protein family. As to quaternary structure, homooligomers. Forms double-helical filaments necessary for the formation of replication compartments within the host nucleus. Interacts with the origin-binding protein. Interacts with the helicase primase complex; this interaction stimulates primer synthesis activity of the helicase-primase complex. Interacts with the DNA polymerase. Interacts with the alkaline exonuclease; this interaction increases its nuclease processivity.

The protein localises to the host nucleus. Single-stranded DNA-binding protein required for DNA replication. Functionally, plays several crucial roles in viral infection. Participates in the opening of the viral DNA origin to initiate replication by interacting with the origin-binding protein. May disrupt loops, hairpins and other secondary structures present on ssDNA to reduce and eliminate pausing of viral DNA polymerase at specific sites during elongation. Promotes viral DNA recombination by performing strand-transfer, characterized by the ability to transfer a DNA strand from a linear duplex to a complementary single-stranded DNA circle. Can also catalyze the renaturation of complementary single strands. Additionally, reorganizes the host cell nucleus, leading to the formation of prereplicative sites and replication compartments. This process is driven by the protein which can form double-helical filaments in the absence of DNA. The sequence is that of Major DNA-binding protein from Simian cytomegalovirus (strain Colburn).